The primary structure comprises 120 residues: NAD(P)H-quinone oxidoreductase subunit 3, chloroplastic (120 aa).

A run of 3 helical transmembrane segments spans residues 3–23 (ILEG…IPVI), 64–84 (MFAL…PWAV), and 89–109 (LGLS…IGLV).

This sequence belongs to the complex I subunit 3 family. In terms of assembly, NDH is composed of at least 16 different subunits, 5 of which are encoded in the nucleus.

Its subcellular location is the plastid. The protein resides in the chloroplast thylakoid membrane. It catalyses the reaction a plastoquinone + NADH + (n+1) H(+)(in) = a plastoquinol + NAD(+) + n H(+)(out). It carries out the reaction a plastoquinone + NADPH + (n+1) H(+)(in) = a plastoquinol + NADP(+) + n H(+)(out). NDH shuttles electrons from NAD(P)H:plastoquinone, via FMN and iron-sulfur (Fe-S) centers, to quinones in the photosynthetic chain and possibly in a chloroplast respiratory chain. The immediate electron acceptor for the enzyme in this species is believed to be plastoquinone. Couples the redox reaction to proton translocation, and thus conserves the redox energy in a proton gradient. The polypeptide is NAD(P)H-quinone oxidoreductase subunit 3, chloroplastic (Nephroselmis olivacea (Green alga)).